The following is a 136-amino-acid chain: Cystatin-2 (136 aa).

Positions 1–24 (MALLRGFLVCSLLLLSCICKEALG) are cleaved as a signal peptide. The region spanning 29–124 (GGLENASPEE…CTFEVYNIPW (96 aa)) is the Cystatin domain. Positions 73-77 (QIVSG) match the Secondary area of contact motif. Disulfide bonds link Cys-91/Cys-101 and Cys-115/Cys-135.

This sequence belongs to the cystatin family. In terms of tissue distribution, expressed by the venom gland.

Its subcellular location is the secreted. Inhibits various C1 cysteine proteases including cathepsin L, papain and cathepsin B. This protein has no toxic activity and its function in the venom is unknown. It may play a role as housekeeping or regulatory protein. The sequence is that of Cystatin-2 from Crotalus adamanteus (Eastern diamondback rattlesnake).